We begin with the raw amino-acid sequence, 425 residues long: MSKVAEIRGLEVLDSRGNPTVEVEVVLDDGAVGRAIVPSGASTGAREAVELRDADPRRYLGRGVLRAVQAVNTELCEALLGRDAGDQPEIDTIMIDLDGTPDKRRLGANALLGVSLAVAHAAAMSNGLPLFAYLGGERASLLPVPLINVINGGAHADNALDFQEFMIVPAGAPTFTEAVRASAEVFHTLRAMLKAAGYTTNVGDEGGFAPEFHAAEEALDILVAAIAKAGYRPGEDIALAIDPAASELYVNGSYVYQGEGVERSREEQVAYLVRLADRYPIVSIEDGMAEDDAMGWQLLTRQLGKRCQLVGDDVFCTHPTLLRQGVEQGMANAILVKANQIGTLSEMRETVRVAHGYAYSAVMSHRSGETEDVTIADLAVALRCGQIKTGSMSRADRTAKYNRLLRIERELGSRAEYAGALLRRR.

Q163 lines the (2R)-2-phosphoglycerate pocket. Residue E205 is the Proton donor of the active site. The Mg(2+) site is built by D242, E285, and D312. Residues K337, R366, S367, and K388 each contribute to the (2R)-2-phosphoglycerate site. K337 acts as the Proton acceptor in catalysis.

The protein belongs to the enolase family. Mg(2+) is required as a cofactor.

The protein localises to the cytoplasm. It is found in the secreted. The protein resides in the cell surface. The enzyme catalyses (2R)-2-phosphoglycerate = phosphoenolpyruvate + H2O. It participates in carbohydrate degradation; glycolysis; pyruvate from D-glyceraldehyde 3-phosphate: step 4/5. Functionally, catalyzes the reversible conversion of 2-phosphoglycerate (2-PG) into phosphoenolpyruvate (PEP). It is essential for the degradation of carbohydrates via glycolysis. The polypeptide is Enolase 2 (Cupriavidus metallidurans (strain ATCC 43123 / DSM 2839 / NBRC 102507 / CH34) (Ralstonia metallidurans)).